Consider the following 755-residue polypeptide: Primary amine oxidase (755 aa).

Positions 1–30 (MANGLKFSPRKTALALAVAVVCAWQSPVFA) are cleaved as a signal peptide. Residues 411-422 (YLDSGDYGMGTL) and 493-498 (VGNYDY) each bind substrate. The active-site Proton acceptor is aspartate 413. Tyrosine 496 acts as the Schiff-base intermediate with substrate; via topaquinone in catalysis. At tyrosine 496 the chain carries 2',4',5'-topaquinone. Histidine 554 and histidine 556 together coordinate Cu cation. The Ca(2+) site is built by aspartate 563, leucine 564, aspartate 565, glutamate 603, tyrosine 697, aspartate 700, glutamate 702, and aspartate 708. Aspartate 563 serves as a coordination point for Mn(2+). Aspartate 565 contacts Mn(2+). Aspartate 708 lines the Mn(2+) pocket. Residue histidine 719 participates in Cu cation binding.

It belongs to the copper/topaquinone oxidase family. As to quaternary structure, homodimer. The cofactor is Cu cation. Zn(2+) is required as a cofactor. It depends on Ca(2+) as a cofactor. L-topaquinone serves as cofactor. Requires Mn(2+) as cofactor. In terms of processing, topaquinone (TPQ) is generated by copper-dependent autoxidation of a specific tyrosyl residue.

Its subcellular location is the periplasm. The catalysed reaction is a primary methyl amine + O2 + H2O = an aldehyde + H2O2 + NH4(+). Functionally, active on tyramine, tryptamine, beta-phenethylamine and dopamine. This Klebsiella aerogenes (Enterobacter aerogenes) protein is Primary amine oxidase (maoA).